The chain runs to 501 residues: Ammonium transporter 1 member 1 (501 aa).

10 helical membrane passes run L8–G28, L46–G66, V81–G101, F128–E148, F152–H172, F199–I219, L243–F263, V333–C353, L366–F386, and L419–I439. A Phosphothreonine modification is found at T460. Residues S475, S488, S490, and S492 each carry the phosphoserine modification.

It belongs to the ammonia transporter channel (TC 1.A.11.2) family. As to quaternary structure, self interacts. Interacts with the receptor protein kinases CEPR2, At2g28990 and PAM74. In terms of tissue distribution, highly expressed in roots. Expressed in root tips, root hairs, root epidermis, rhizodermis, cortex and pericycle. Expressed in leaves epidermal and mesophyll cells.

The protein resides in the cell membrane. In terms of biological role, high affinity ammonium transporter probably involved in ammonium uptake from the soil, long-distance transport to the shoots and re-uptake of apoplastic ammonium that derives from photorespiration in shoots. Contributes with AMT1-3 to the overall ammonium uptake capacity in roots under nitrogen-deficiency conditions. This Arabidopsis thaliana (Mouse-ear cress) protein is Ammonium transporter 1 member 1 (AMT1-1).